Here is a 475-residue protein sequence, read N- to C-terminus: uncharacterized protein (475 aa).

This is an uncharacterized protein from Schizosaccharomyces pombe (strain 972 / ATCC 24843) (Fission yeast).